The primary structure comprises 520 residues: 2-isopropylmalate synthase (520 aa).

A Pyruvate carboxyltransferase domain is found at Ile12–Val274. Asp21, His209, His211, and Asn245 together coordinate Mn(2+). The interval Arg396 to Ala520 is regulatory domain.

The protein belongs to the alpha-IPM synthase/homocitrate synthase family. LeuA type 1 subfamily. As to quaternary structure, homodimer. Mn(2+) is required as a cofactor.

It localises to the cytoplasm. It carries out the reaction 3-methyl-2-oxobutanoate + acetyl-CoA + H2O = (2S)-2-isopropylmalate + CoA + H(+). It functions in the pathway amino-acid biosynthesis; L-leucine biosynthesis; L-leucine from 3-methyl-2-oxobutanoate: step 1/4. In terms of biological role, catalyzes the condensation of the acetyl group of acetyl-CoA with 3-methyl-2-oxobutanoate (2-ketoisovalerate) to form 3-carboxy-3-hydroxy-4-methylpentanoate (2-isopropylmalate). This Xanthomonas oryzae pv. oryzae (strain KACC10331 / KXO85) protein is 2-isopropylmalate synthase.